A 102-amino-acid chain; its full sequence is MFAIIETGGKQYKVKEHDIIRIEKLNASVGEEVTLSKVIALTGVNNEVIFTQNASVTASVLEQCRNDKVIIFKKKRRKNYRRKNGHRQYMTVLRITKINNME.

The protein belongs to the bacterial ribosomal protein bL21 family. Part of the 50S ribosomal subunit. Contacts protein L20.

In terms of biological role, this protein binds to 23S rRNA in the presence of protein L20. The protein is Large ribosomal subunit protein bL21 of Ehrlichia ruminantium (strain Welgevonden).